Reading from the N-terminus, the 354-residue chain is MKFLDQCKIYIRSGNGGGGSVSFRREKYIEYGGPDGGDGGRGGDVWIEAVEGLNTLIDYRYQQHFKAGTGVHGMGRARHGAAGEDVVLKVPVGTEVLEEDKETLIADLDHAGMRLLLAKGGNGGWGNLHFKGPVNQAPKYANPGQEGEERWIWLRLKLIADVGLVGLPNAGKSTFLAAASAAKPKIADYPFTTLTPNLGVVDLSSSERFVLADIPGLIEGASEGAGLGTRFLGHVERSATLIHLIDATQDDVAGAYETIRGELEAYGDELADKAEILALNKIDALDEETLAEKVAELEAVSGIKPRLVSGVSGQGVTELLRAAYKQVRIRRGDLEEEIDDDEDHVDETPGGWTP.

One can recognise an Obg domain in the interval 1 to 159; it reads MKFLDQCKIY…RWIWLRLKLI (159 aa). The region spanning 160–328 is the OBG-type G domain; it reads ADVGLVGLPN…LLRAAYKQVR (169 aa). Residues 166–173, 191–195, 213–216, 280–283, and 309–311 contribute to the GTP site; these read GLPNAGKS, FTTLT, DIPG, NKID, and SGV. Residues Ser173 and Thr193 each contribute to the Mg(2+) site. Over residues 335 to 345 the composition is skewed to acidic residues; sequence EEEIDDDEDHV. Residues 335–354 are disordered; it reads EEEIDDDEDHVDETPGGWTP.

The protein belongs to the TRAFAC class OBG-HflX-like GTPase superfamily. OBG GTPase family. Monomer. Requires Mg(2+) as cofactor.

It localises to the cytoplasm. An essential GTPase which binds GTP, GDP and possibly (p)ppGpp with moderate affinity, with high nucleotide exchange rates and a fairly low GTP hydrolysis rate. Plays a role in control of the cell cycle, stress response, ribosome biogenesis and in those bacteria that undergo differentiation, in morphogenesis control. This Caulobacter vibrioides (strain ATCC 19089 / CIP 103742 / CB 15) (Caulobacter crescentus) protein is GTPase Obg.